Consider the following 471-residue polypeptide: Glutamate--tRNA ligase (471 aa).

The 'HIGH' region signature appears at 9–19 (PSPTGYLHVGG). Residues Cys-98, Cys-100, Cys-125, and His-127 each coordinate Zn(2+). Positions 237–241 (KLSKR) match the 'KMSKS' region motif. Lys-240 contacts ATP.

It belongs to the class-I aminoacyl-tRNA synthetase family. Glutamate--tRNA ligase type 1 subfamily. In terms of assembly, monomer. The cofactor is Zn(2+).

It is found in the cytoplasm. The enzyme catalyses tRNA(Glu) + L-glutamate + ATP = L-glutamyl-tRNA(Glu) + AMP + diphosphate. Functionally, catalyzes the attachment of glutamate to tRNA(Glu) in a two-step reaction: glutamate is first activated by ATP to form Glu-AMP and then transferred to the acceptor end of tRNA(Glu). The chain is Glutamate--tRNA ligase from Salmonella paratyphi A (strain ATCC 9150 / SARB42).